The primary structure comprises 170 residues: Protein ripply3 (170 aa).

Positions 40 to 43 (WRPW) match the WRPW motif motif. A compositionally biased stretch (basic and acidic residues) spans 51–61 (ELDGQQRRSGE). The interval 51–78 (ELDGQQRRSGEADGVPTNTGPKGALGFQ) is disordered. Positions 79–114 (HPVRLYMPKSKTSEYLQHMGRKVLASFPVQATIHFY) are ripply homology domain. A compositionally biased stretch (polar residues) spans 142–155 (GVDSSRGSSDNYSV). The tract at residues 142–170 (GVDSSRGSSDNYSVQGGPKRNIGSHAGSA) is disordered.

The protein belongs to the ripply family. As to quaternary structure, interacts with tbx1 and tle4/grg4. At neurula stage, expressed in the region close to the heart mesoderm. At the tailbud stage, expressed in the pharyngeal region.

It localises to the nucleus. Functionally, acts as a transcriptional corepressor. Negative regulator of the transcriptional activity of tbx1 that plays a key role in pharyngeal development. Plays a role in the formation of the anteroposterior (AP) axis during embryonic development; required to establish the posterolateral border of the pre-placodal ectoderm (PPE) acting downstream of the retinoic acid receptor (RAR) signaling. The protein is Protein ripply3 (ripply3) of Xenopus laevis (African clawed frog).